Reading from the N-terminus, the 498-residue chain is Myotilin (498 aa).

3 disordered regions span residues 1–46 (MFNY…QPRQ), 64–151 (MSSS…HEIQ), and 202–241 (QDDS…NDQD). Arginine 20 is subject to Omega-N-methylarginine. Low complexity predominate over residues 29 to 43 (SSFSSQTKQSSIIIQ). The segment covering 77 to 138 (AGSNPGQRVT…INAKPSQTAN (62 aa)) has biased composition (polar residues). The necessary for interaction with ACTN1 stretch occupies residues 79–150 (SNPGQRVTTT…PIPRTPDHEI (72 aa)). The span at 202–212 (QDDSGAQDSQQ) shows a compositional bias: low complexity. The necessary for interaction with FLNC stretch occupies residues 215–493 (SEHARLQVPT…QRLAAQSGLY (279 aa)). Residues 215-498 (SEHARLQVPT…QSGLYESEEL (284 aa)) are necessary for interaction with ACTA1. The segment covering 222 to 235 (VPTSQVRSRSTSRG) has biased composition (polar residues). 2 consecutive Ig-like C2-type domains span residues 250–335 (PRFI…ATFT) and 349–441 (PMFI…LDVT).

This sequence belongs to the myotilin/palladin family. Homodimer. Interacts with ACTA1, ACTN1, FLNA, FLNB, FLNC and MYOZ2. Interacts with the C-terminal region of MYOZ1. In terms of tissue distribution, expressed in skeletal muscle (at protein level). Expressed in skeletal muscle, heart, bone marrow and thyroid gland.

The protein resides in the cell membrane. The protein localises to the sarcolemma. It is found in the cytoplasm. Its subcellular location is the cytoskeleton. It localises to the myofibril. The protein resides in the sarcomere. The protein localises to the z line. In terms of biological role, component of a complex of multiple actin cross-linking proteins. Involved in the control of myofibril assembly and stability at the Z lines in muscle cells. The protein is Myotilin (MYOT) of Homo sapiens (Human).